Here is a 1849-residue protein sequence, read N- to C-terminus: NADH-ubiquinone oxidoreductase chain 5 (1849 aa).

41 consecutive transmembrane segments (helical) span residues 76–93, 98–120, 190–212, 222–244, 279–301, 316–338, 358–380, 390–412, 419–441, 483–505, 510–532, 536–558, 565–587, 621–640, 683–705, 718–740, 745–767, 797–819, 868–890, 905–927, 966–988, 1008–1030, 1073–1095, 1105–1127, 1172–1194, 1219–1241, 1248–1270, 1296–1318, 1330–1352, 1357–1379, 1418–1440, 1444–1466, 1478–1500, 1504–1526, 1533–1555, 1559–1581, 1602–1624, 1639–1661, 1719–1741, 1773–1795, and 1802–1824; these read YLLLYYCIYALELYTVCY, LILLYLIQLNYILLTNIVGYLQY, YWLCVVIWNNIGWWTYQLMIIGW, LVPTILAIINLILTYIDLIIYLY, HLLTVIIPNYCLAIYNSGLILSS, LALQYLVAPLYISCSLLIYILCY, LEIIYLDILVNSLISIIILILSV, VIILSQYINIISGYVAMPTTILI, IAVYIYYLVDYIATISTLIIWLL, LLDAIMNVVTSVILLITVSCLGV, LFIAVYPVYCIGVLLLNTLLQVV, ISYIIGTFMNAIILICDIYVYSI, LIMYVYFVAAIILEPIIDIIHTI, IWLIADLILAYIDLIRSTLV, WVRFLIYCAGNNINLLVLLYVQF, LTRIQLYATIPVIISSYIYQGIL, IISYYNTLLVATLEFIQIWLTIL, PTWVLFECLSTCVGLVELYLVTV, ILLLMSSGLQSTVLNTIFDLLSL, LTVQVCTIPAALYSTIIYPYIVL, LYSYNLYLLELYNIYYFWLSLLE, PDLLISLISYIIDICILSLELLL, LTVVFYILNLCGILNEISIQILF, LATIYCTVVLPYILIILEILSYL, TYLLYIVLEQLLLVIIDLYIYII, VYFLYFMIFIGYLLCGIFAFFYH, GIFYLSEMIIMGILIFSIVTLYY, IITFDILSILGVLLVATLTAIIL, FAYNVLATLVLFSASIICFIVSY, MIIFWEISGTLSLFLIDMYYARI, LFALLPYAQFNLSILGNLIFDFT, VIVFSIFSAAACKCAQFLLFVWL, ALIHSSTLVVMGIFMILRFAPIL, VYTLYIMSILGSLTVAYGAILAT, KAVAYSTISQIGYLFTGCAFLAF, LIYLILHAICKALLFVLVGYIVH, IAIYMFILCMVLAGAPYTVGFFA, VATFIICCWIISFACTPFYLYRI, LLHLLLLLIVLFCGEFLVFLVTG, VRNIQLLIIVLFALVTLYITAIN, and IIYLSVVLPILAIIFICLGHYFL.

This sequence belongs to the complex I subunit 5 family.

The protein localises to the hydrogenosome membrane. It carries out the reaction a ubiquinone + NADH + 5 H(+)(in) = a ubiquinol + NAD(+) + 4 H(+)(out). This is NADH-ubiquinone oxidoreductase chain 5 (nad5) from Nyctotherus ovalis.